Here is an 87-residue protein sequence, read N- to C-terminus: UPF0512 protein B (87 aa).

Belongs to the UPF0512 family.

The chain is UPF0512 protein B from Dictyostelium discoideum (Social amoeba).